Reading from the N-terminus, the 125-residue chain is Large ribosomal subunit protein bL12 (125 aa).

Belongs to the bacterial ribosomal protein bL12 family. In terms of assembly, homodimer. Part of the ribosomal stalk of the 50S ribosomal subunit. Forms a multimeric L10(L12)X complex, where L10 forms an elongated spine to which 2 to 4 L12 dimers bind in a sequential fashion. Binds GTP-bound translation factors.

Its function is as follows. Forms part of the ribosomal stalk which helps the ribosome interact with GTP-bound translation factors. Is thus essential for accurate translation. The chain is Large ribosomal subunit protein bL12 from Rickettsia africae (strain ESF-5).